The following is a 115-amino-acid chain: Replication initiation control protein YabA (115 aa).

The Zn(2+) site is built by H86, C88, C102, and C105.

It belongs to the YabA family. In terms of assembly, homotetramer. Interacts with both DnaA and DnaN, acting as a bridge between these two proteins. Zn(2+) serves as cofactor.

The protein localises to the cytoplasm. It is found in the nucleoid. Its function is as follows. Involved in control of chromosome replication initiation. Inhibits the cooperative binding of DnaA to the oriC region, thus negatively regulating initiation of chromosome replication. Inhibits the ability of DnaA-ATP to form a helix on DNA; does not disassemble preformed DnaA-DNA helices. Decreases the residence time of DnaA on the chromosome at its binding sites (oriC, replication forks and promoter-binding sites). Tethers DnaA to the replication machinery via the DNA polymerase beta sliding clamp subunit (dnaN). Associates with oriC and other DnaA targets on the chromosome in a DnaA-dependent manner. The sequence is that of Replication initiation control protein YabA from Enterococcus faecalis (strain ATCC 700802 / V583).